We begin with the raw amino-acid sequence, 354 residues long: Chorismate synthase (354 aa).

R48 is a binding site for NADP(+). FMN-binding positions include 125-127 (RAS), A280, 295-299 (KPIPS), and R321.

The protein belongs to the chorismate synthase family. Homotetramer. The cofactor is FMNH2.

The enzyme catalyses 5-O-(1-carboxyvinyl)-3-phosphoshikimate = chorismate + phosphate. It functions in the pathway metabolic intermediate biosynthesis; chorismate biosynthesis; chorismate from D-erythrose 4-phosphate and phosphoenolpyruvate: step 7/7. Functionally, catalyzes the anti-1,4-elimination of the C-3 phosphate and the C-6 proR hydrogen from 5-enolpyruvylshikimate-3-phosphate (EPSP) to yield chorismate, which is the branch point compound that serves as the starting substrate for the three terminal pathways of aromatic amino acid biosynthesis. This reaction introduces a second double bond into the aromatic ring system. The chain is Chorismate synthase from Syntrophus aciditrophicus (strain SB).